Here is a 414-residue protein sequence, read N- to C-terminus: CinA-like protein (414 aa).

It belongs to the CinA family.

The sequence is that of CinA-like protein from Koribacter versatilis (strain Ellin345).